Consider the following 522-residue polypeptide: Glucose-6-phosphate isomerase (522 aa).

The active-site Proton donor is the Glu351. Catalysis depends on residues His382 and Lys491.

Belongs to the GPI family.

It localises to the cytoplasm. It carries out the reaction alpha-D-glucose 6-phosphate = beta-D-fructose 6-phosphate. It participates in carbohydrate biosynthesis; gluconeogenesis. Its pathway is carbohydrate degradation; glycolysis; D-glyceraldehyde 3-phosphate and glycerone phosphate from D-glucose: step 2/4. Its function is as follows. Catalyzes the reversible isomerization of glucose-6-phosphate to fructose-6-phosphate. This chain is Glucose-6-phosphate isomerase, found in Albidiferax ferrireducens (strain ATCC BAA-621 / DSM 15236 / T118) (Rhodoferax ferrireducens).